The following is a 46-amino-acid chain: MSAPCGDIINKTNNKIINNDDSYDENEYSNPLLKYTNLLTVIPLNY.

This is an uncharacterized protein from Dictyostelium discoideum (Social amoeba).